Consider the following 585-residue polypeptide: Arginine--tRNA ligase (585 aa).

The 'HIGH' region signature appears at 131–141 (ANPTGPMHVGH).

The protein belongs to the class-I aminoacyl-tRNA synthetase family. Monomer.

It localises to the cytoplasm. It catalyses the reaction tRNA(Arg) + L-arginine + ATP = L-arginyl-tRNA(Arg) + AMP + diphosphate. The chain is Arginine--tRNA ligase from Brucella anthropi (strain ATCC 49188 / DSM 6882 / CCUG 24695 / JCM 21032 / LMG 3331 / NBRC 15819 / NCTC 12168 / Alc 37) (Ochrobactrum anthropi).